A 356-amino-acid polypeptide reads, in one-letter code: uncharacterized protein (356 aa).

The first 21 residues, 1–21 (MHWSRFVGIFLVFSVFSLVNC), serve as a signal peptide directing secretion. The segment at 293-317 (RPETDYEGANLPNIPSKKGSANQPV) is disordered.

This is an uncharacterized protein from Acanthamoeba polyphaga mimivirus (APMV).